The sequence spans 497 residues: Serine hydroxymethyltransferase (497 aa).

(6S)-5,6,7,8-tetrahydrofolate-binding positions include Leu176 and 180-182 (GHL). Residue Lys289 is modified to N6-(pyridoxal phosphate)lysine.

Belongs to the SHMT family. As to quaternary structure, homodimer. Pyridoxal 5'-phosphate serves as cofactor.

The protein resides in the cytoplasm. The catalysed reaction is (6R)-5,10-methylene-5,6,7,8-tetrahydrofolate + glycine + H2O = (6S)-5,6,7,8-tetrahydrofolate + L-serine. It functions in the pathway one-carbon metabolism; tetrahydrofolate interconversion. It participates in amino-acid biosynthesis; glycine biosynthesis; glycine from L-serine: step 1/1. Its function is as follows. Catalyzes the reversible interconversion of serine and glycine with tetrahydrofolate (THF) serving as the one-carbon carrier. This reaction serves as the major source of one-carbon groups required for the biosynthesis of purines, thymidylate, methionine, and other important biomolecules. Also exhibits THF-independent aldolase activity toward beta-hydroxyamino acids, producing glycine and aldehydes, via a retro-aldol mechanism. The polypeptide is Serine hydroxymethyltransferase (Chlamydia caviae (strain ATCC VR-813 / DSM 19441 / 03DC25 / GPIC) (Chlamydophila caviae)).